The sequence spans 367 residues: Trans-enoyl reductase ffsC (367 aa).

Residue 55–58 (CDWK) participates in NADP(+) binding. A substrate-binding site is contributed by 143–150 (TGIGTLGL). Residues 203–206 (SAKN), tyrosine 221, and 268–269 (LE) contribute to the NADP(+) site. 288–292 (GMAIL) contacts substrate. 357–358 (VS) lines the NADP(+) pocket.

Belongs to the zinc-containing alcohol dehydrogenase family. As to quaternary structure, monomer.

Its pathway is mycotoxin biosynthesis. In terms of biological role, trans-enoyl reductase; part of the gene cluster that mediates the biosynthesis of the cytotoxic leucine-containing cytochalasans, including aspochalasin C, aspochalasin E, TMC-169, flavichalasine F, aspergillin PZ, aspochalasin M and flavichalasine G. The first step in the pathway is catalyzed by the hybrid PKS-NRPS ffsA that utilizes 8 units of malonyl-CoA to iteratively assemble the octaketide chain before addition of L-leucine by the C-terminal NRPS modules. Because ffsA lacks a designated enoylreductase (ER) domain, the required activity is provided the enoyl reductase fssC. The methyltransferase (MT) domain of ffsA catalyzes the alpha-methylation at C10 and C14 using S-adenosyl-L-methionine as the methyl-donating cosubstrate. Reduction by the hydrolyase ffsE, followed by dehydration and intra-molecular Diels-Alder cyclization by the Diels-Alderase ffsF then yield the required isoindolone-fused macrocycle. A number of oxidative steps catalyzed by the tailoring cytochrome P450 monooxygenase ffsD, the FAD-linked oxidoreductase ffsJ and the short-chain dehydrogenase/reductase ffsI, are further required to afford the final products. The sequence is that of Trans-enoyl reductase ffsC from Aspergillus flavipes.